The following is a 295-amino-acid chain: GTPase Era (295 aa).

Residues 5–172 (YCGYAAIIGR…EQAVHQLMPE (168 aa)) enclose the Era-type G domain. The tract at residues 13-20 (GRPNVGKS) is G1. A GTP-binding site is contributed by 13 to 20 (GRPNVGKS). The tract at residues 39-43 (QTTRY) is G2. Positions 60-63 (DTPG) are G3. GTP contacts are provided by residues 60–64 (DTPGL) and 121–124 (NKVD). The tract at residues 121-124 (NKVD) is G4. The interval 151-153 (LSA) is G5. In terms of domain architecture, KH type-2 spans 203 to 279 (LGQEIPYSLA…FLQLWVKVKS (77 aa)).

This sequence belongs to the TRAFAC class TrmE-Era-EngA-EngB-Septin-like GTPase superfamily. Era GTPase family. As to quaternary structure, monomer.

It is found in the cytoplasm. Its subcellular location is the cell inner membrane. Its function is as follows. An essential GTPase that binds both GDP and GTP, with rapid nucleotide exchange. Plays a role in 16S rRNA processing and 30S ribosomal subunit biogenesis and possibly also in cell cycle regulation and energy metabolism. The sequence is that of GTPase Era from Coxiella burnetii (strain CbuG_Q212) (Coxiella burnetii (strain Q212)).